Reading from the N-terminus, the 435-residue chain is GTPase Der (435 aa).

EngA-type G domains are found at residues 4-167 (KIVA…SKND) and 175-350 (TKIA…QSLS). Residues 10–17 (GRPNVGKS), 57–61 (DTGGI), 119–122 (NKYD), 181–188 (GRPNVGKS), 228–232 (DTAGI), and 293–296 (NKWD) contribute to the GTP site. A KH-like domain is found at 351 to 435 (VKVKTYVLNE…PINLIFRERK (85 aa)).

It belongs to the TRAFAC class TrmE-Era-EngA-EngB-Septin-like GTPase superfamily. EngA (Der) GTPase family. In terms of assembly, associates with the 50S ribosomal subunit.

Functionally, GTPase that plays an essential role in the late steps of ribosome biogenesis. This is GTPase Der from Mycoplasma mycoides subsp. mycoides SC (strain CCUG 32753 / NCTC 10114 / PG1).